The primary structure comprises 757 residues: Protein ALTERED SEED GERMINATION 2 (757 aa).

WD repeat units follow at residues 6-43 (FHDG…LSQE), 48-87 (GHQG…LLHS), 91-132 (GHTA…GRAE), 145-185 (CHTR…SCPP), 213-253 (KQTL…PLAS), and 277-316 (RTNL…CSTG). A Nuclear localization signal motif is present at residues 245–257 (RRMLPPLASSRKR). Residues 442 to 475 (FKAHYYMSEALQQLGKCKEALDFATAAQHMNPSD) form a TPR repeat. The interval 519–601 (ANSDSSHDMS…SSSQNDRTSY (83 aa)) is disordered. Residues 523–532 (SSHDMSRSER) are compositionally biased toward basic and acidic residues. Positions 533–543 (EDSDYDEELEL) are enriched in acidic residues. Positions 582-601 (TVDNASSGTASSSQNDRTSY) are enriched in polar residues. 2 WD repeats span residues 618–658 (NVGT…LMKV) and 661–700 (GDES…PSIV). The S-12-hydroxyfarnesyl cysteine; by FTB/ERA1 moiety is linked to residue Cys-754.

Interacts with DDB1; the subcellular localization of this complex depends on farnesylation status. Binds to HDA9 in the cytosol when farnesylated. In terms of processing, farnesylated at Cys-754 by FTB/ERA1; this modification triggers an exclusion from the nucleus.

It is found in the nucleus. It localises to the cytoplasm. The protein localises to the cytosol. It participates in protein modification; protein ubiquitination. In terms of biological role, may function as a substrate adapter for CUL4-DDB1 E3 ubiquitin-protein ligase complex. Negative regulator of fatty acid biosynthetic process and accumulation. Acts as an abscisic acid (ABA) negative regulator. Involved in responses to salt (NaCl) and osmotic (e.g. in response to mannitol and PEG) stresses. This is Protein ALTERED SEED GERMINATION 2 from Arabidopsis thaliana (Mouse-ear cress).